The sequence spans 90 residues: Probable Fe(2+)-trafficking protein (90 aa).

Belongs to the Fe(2+)-trafficking protein family.

Its function is as follows. Could be a mediator in iron transactions between iron acquisition and iron-requiring processes, such as synthesis and/or repair of Fe-S clusters in biosynthetic enzymes. The sequence is that of Probable Fe(2+)-trafficking protein from Pseudoalteromonas atlantica (strain T6c / ATCC BAA-1087).